The chain runs to 539 residues: Chaperonin GroEL (539 aa).

ATP contacts are provided by residues 29–32, 86–90, glycine 413, 476–478, and aspartate 492; these read TIGP, DGTTT, and NAA.

Belongs to the chaperonin (HSP60) family. In terms of assembly, forms a cylinder of 14 subunits composed of two heptameric rings stacked back-to-back. Interacts with the co-chaperonin GroES.

Its subcellular location is the cytoplasm. It catalyses the reaction ATP + H2O + a folded polypeptide = ADP + phosphate + an unfolded polypeptide.. In terms of biological role, together with its co-chaperonin GroES, plays an essential role in assisting protein folding. The GroEL-GroES system forms a nano-cage that allows encapsulation of the non-native substrate proteins and provides a physical environment optimized to promote and accelerate protein folding. This chain is Chaperonin GroEL, found in Pediococcus pentosaceus (strain ATCC 25745 / CCUG 21536 / LMG 10740 / 183-1w).